The chain runs to 100 residues: Nucleoid-associated protein HPG27_32 (100 aa).

This sequence belongs to the YbaB/EbfC family. As to quaternary structure, homodimer.

Its subcellular location is the cytoplasm. The protein localises to the nucleoid. Binds to DNA and alters its conformation. May be involved in regulation of gene expression, nucleoid organization and DNA protection. This Helicobacter pylori (strain G27) protein is Nucleoid-associated protein HPG27_32.